Consider the following 189-residue polypeptide: Large ribosomal subunit protein eL18 (189 aa).

This sequence belongs to the eukaryotic ribosomal protein eL18 family.

Its subcellular location is the cytoplasm. The protein is Large ribosomal subunit protein eL18 (RpL18) of Anopheles gambiae (African malaria mosquito).